The chain runs to 220 residues: Acetate CoA-transferase subunit alpha (220 aa).

24-30 (GGFMGIG) contributes to the CoA binding site.

This sequence belongs to the 3-oxoacid CoA-transferase subunit A family. In terms of assembly, heterotetramer composed of two alpha subunits (AtoD) and two beta subunits (AtoA).

The protein localises to the cytoplasm. The catalysed reaction is an acyl-CoA + acetate = a carboxylate + acetyl-CoA. The enzyme catalyses acetoacetate + acetyl-CoA = acetoacetyl-CoA + acetate. It catalyses the reaction butanoate + acetyl-CoA = butanoyl-CoA + acetate. It carries out the reaction acetoacetate + butanoyl-CoA = acetoacetyl-CoA + butanoate. It functions in the pathway lipid metabolism; short-chain fatty acid metabolism. With respect to regulation, inhibited by p-chloromercuribenzoate. In terms of biological role, coenzyme A transferase which is involved in short-chain fatty acid degradation and catalyzes the activation of short-chain fatty acids to their respective CoA thiolesters. During acetoacetate degradation, catalyzes the transfer of CoA from acetyl-CoA to acetoacetate by a mechanism involving a covalent enzyme-CoA compound as a reaction intermediate. Utilizes a variety of short chain acyl-CoA and carboxylic acid substrates but exhibits maximal activity with normal and 3-keto substrates. The sequence is that of Acetate CoA-transferase subunit alpha from Escherichia coli (strain K12).